A 781-amino-acid chain; its full sequence is Transcription factor Sp3 (781 aa).

Residues 1–12 show a composition bias toward basic and acidic residues; the sequence is MTAPEKPVKQEE. Disordered regions lie at residues 1–53 and 65–88; these read MTAP…AAQD and TCSK…AGAP. Gly residues predominate over residues 20–31; it reads SGGGGGGGGGHG. Positions 32–53 are enriched in low complexity; sequence EYLQQQQQHGNGAVAAAAAAQD. A Phosphoserine modification is found at Ser-73. Lys-120 participates in a covalent cross-link: Glycyl lysine isopeptide (Lys-Gly) (interchain with G-Cter in SUMO). The interval 138-237 is transactivation domain (Gln-rich); that stretch reads QYVLPLQNLQ…IPQTGQVQVQ (100 aa). The tract at residues 301–338 is disordered; the sequence is QAMDSSDNSERTGERVSPDINETNTDTDLFVPTSSSSQ. Positions 308-317 are enriched in basic and acidic residues; that stretch reads NSERTGERVS. Polar residues predominate over residues 320–338; it reads INETNTDTDLFVPTSSSSQ. A transactivation domain (Gln-rich) region spans residues 350–499; it reads QQNTNSLTTS…TPVQTLTLGQ (150 aa). A 9aaTAD motif is present at residues 461–469; the sequence is VTWQTFQVQ. The segment at 534 to 620 is repressor domain; it reads IQLHPGENAD…RGTNLGKKKQ (87 aa). N6-acetyllysine; alternate is present on Lys-551. A Glycyl lysine isopeptide (Lys-Gly) (interchain with G-Cter in SUMO); alternate cross-link involves residue Lys-551. Residue Lys-551 forms a Glycyl lysine isopeptide (Lys-Gly) (interchain with G-Cter in SUMO1); alternate linkage. Lys-551 participates in a covalent cross-link: Glycyl lysine isopeptide (Lys-Gly) (interchain with G-Cter in SUMO2); alternate. Phosphoserine occurs at positions 563 and 566. Lys-593 is covalently cross-linked (Glycyl lysine isopeptide (Lys-Gly) (interchain with G-Cter in SUMO2)). The C2H2-type 1 zinc-finger motif lies at 621–645; it reads HICHIPGCGKVYGKTSHLRAHLRWH. Ser-646 is modified (phosphoserine). 2 consecutive C2H2-type zinc fingers follow at residues 651 to 675 and 681 to 703; these read FVCN…RRTH and FVCP…IKTH.

This sequence belongs to the Sp1 C2H2-type zinc-finger protein family. As to quaternary structure, interacts with HLTF; the interaction may be required for basal transcriptional activity of HLTF. Interacts with HDAC1; the interaction deacetylates SP3 and regulates its transcriptional activity. Interacts with HDAC2 (preferably the CK2-phosphorylated form); the interaction deacetylates SP3 and regulates its transcriptional activity. Interacts with MEIS2 isoform 4 and PBX1 isoform PBX1a. Not glycosylated. Post-translationally, acetylated by histone acetyltransferase p300, deacetylated by HDACs. Acetylation/deacetylation states regulate transcriptional activity. Acetylation appears to activate transcription. Alternate sumoylation and acetylation at Lys-551 also control transcriptional activity. Ceramides can also regulate acetylation/deacetylation events through altering the interaction of HDAC with SP3. In vitro, C(18)-ceramides, but not C(16)-ceramides, increase the interaction of HDAC1 with SP3 and enhance the deacetylation of SP3 and the subsequent repression of the TERT promoter. In terms of processing, sumoylated on all isoforms. Sumoylated on 2 sites in longer isoforms with Lys-551 being the major site. Sumoylation at this site promotes nuclear localization to the nuclear periphery, nuclear dots and PML nuclear bodies. Sumoylation on Lys-551 represses the transactivation activity, except for the largest isoform, L-Sp3, which has little effect on transactivation. Alternate sumoylation and acetylation at Lys-551 also control transcriptional activity. As to expression, ubiquitously expressed.

The protein resides in the nucleus. The protein localises to the PML body. In terms of biological role, transcriptional factor that can act as an activator or repressor depending on isoform and/or post-translational modifications. Binds to GT and GC boxes promoter elements. Competes with SP1 for the GC-box promoters. Weak activator of transcription but can activate a number of genes involved in different processes such as cell-cycle regulation, hormone-induction and house-keeping. This Homo sapiens (Human) protein is Transcription factor Sp3 (SP3).